Reading from the N-terminus, the 549-residue chain is Glucose-6-phosphate isomerase (549 aa).

E353 serves as the catalytic Proton donor. Active-site residues include H384 and K513.

Belongs to the GPI family.

Its subcellular location is the cytoplasm. The catalysed reaction is alpha-D-glucose 6-phosphate = beta-D-fructose 6-phosphate. It participates in carbohydrate biosynthesis; gluconeogenesis. Its pathway is carbohydrate degradation; glycolysis; D-glyceraldehyde 3-phosphate and glycerone phosphate from D-glucose: step 2/4. Its function is as follows. Catalyzes the reversible isomerization of glucose-6-phosphate to fructose-6-phosphate. This Brucella canis (strain ATCC 23365 / NCTC 10854 / RM-666) protein is Glucose-6-phosphate isomerase.